The following is an 809-amino-acid chain: Interleukin-4 receptor subunit alpha (809 aa).

A signal peptide spans 1–25 (MGCLCPGLTLPVSCLILVWAAGSGS). Topologically, residues 26–231 (VKVLRLTACF…NYYEQPLEQR (206 aa)) are extracellular. A disulfide bond links C34 and C44. 2 N-linked (GlcNAc...) asparagine glycosylation sites follow: N53 and N71. An intrachain disulfide couples C74 to C86. N-linked (GlcNAc...) asparagine glycans are attached at residues N112, N128, and N161. Positions 125–222 (APQNLTVHAI…EWSPSTTWHN (98 aa)) constitute a Fibronectin type-III domain. The residue at position 163 (S163) is a Phosphoserine. Residues N175 and N208 are each glycosylated (N-linked (GlcNAc...) asparagine). Residues 211–215 (WSEWS) carry the WSXWS motif motif. A helical transmembrane segment spans residues 232–255 (LPLGVSISCVVILAICLSCYFSII). Over 256–809 (KIKKEWWDQI…STGPTCTSAS (554 aa)) the chain is Cytoplasmic. A Box 1 motif motif is present at residues 261 to 269 (WWDQIPNPA). Disordered stretches follow at residues 369 to 397 (ESEEEEVEEDRGSFCPSPESSGSGFQEGR) and 441 to 468 (SAGPQEAASQGEEQPLNPESNPLATLTQ). The span at 447–468 (AASQGEEQPLNPESNPLATLTQ) shows a compositional bias: polar residues. Residue Y488 is modified to Phosphotyrosine. Residues 514–536 (LGQVDPSIPSAPQPSEPPTALQP) form a disordered region. Phosphotyrosine occurs at positions 566, 590, and 618. The interval 606–674 (QSGVEASSGE…EPTVKGEDPR (69 aa)) is disordered. The ITIM motif signature appears at 695–700 (IVYSAL).

This sequence belongs to the type I cytokine receptor family. Type 4 subfamily. The functional IL4 receptor is formed by initial binding of IL4 to IL4R. Subsequent recruitment to the complex of the common gamma chain, in immune cells, creates a type I receptor and, in non-immune cells, of IL13RA1 forms a type II receptor. IL4R can also interact with the IL13/IL13RA1 complex to form a similar type II receptor. Interacts with PIK3C3. Interacts with the SH2-containing phosphatases, PTPN6/SHIP1, PTPN11/SHIP2 and INPP5D/SHIP. Interacts with JAK1 through a Box 1-containing region; inhibited by SOCS5. Interacts with SOCS5; inhibits IL4 signaling. Interacts with JAK3. Interacts with CLM1. Interacts with IL13RA2. Post-translationally, on IL4 binding, phosphorylated on tyrosine residues in the cytoplasmic domain.

The protein localises to the cell membrane. The protein resides in the secreted. Its function is as follows. Receptor for both interleukin 4 and interleukin 13. Couples to the JAK1/2/3-STAT6 pathway. The IL4 response is involved in promoting Th2 differentiation. The IL4/IL13 responses are involved in regulating IgE production and, chemokine and mucus production at sites of allergic inflammation. In certain cell types, can signal through activation of insulin receptor substrates, IRS1/IRS2. In Equus caballus (Horse), this protein is Interleukin-4 receptor subunit alpha (IL4R).